A 332-amino-acid polypeptide reads, in one-letter code: Methionyl-tRNA formyltransferase (332 aa).

Position 124-127 (124-127 (SLLP)) interacts with (6S)-5,6,7,8-tetrahydrofolate.

It belongs to the Fmt family.

The enzyme catalyses L-methionyl-tRNA(fMet) + (6R)-10-formyltetrahydrofolate = N-formyl-L-methionyl-tRNA(fMet) + (6S)-5,6,7,8-tetrahydrofolate + H(+). Its function is as follows. Attaches a formyl group to the free amino group of methionyl-tRNA(fMet). The formyl group appears to play a dual role in the initiator identity of N-formylmethionyl-tRNA by promoting its recognition by IF2 and preventing the misappropriation of this tRNA by the elongation apparatus. The polypeptide is Methionyl-tRNA formyltransferase (Polynucleobacter asymbioticus (strain DSM 18221 / CIP 109841 / QLW-P1DMWA-1) (Polynucleobacter necessarius subsp. asymbioticus)).